The following is a 355-amino-acid chain: Uroporphyrinogen decarboxylase (355 aa).

Residues 38-42, Asp87, Tyr162, Ser217, and His331 each bind substrate; that span reads RQAGR.

Belongs to the uroporphyrinogen decarboxylase family. As to quaternary structure, homodimer.

It is found in the cytoplasm. The enzyme catalyses uroporphyrinogen III + 4 H(+) = coproporphyrinogen III + 4 CO2. It functions in the pathway porphyrin-containing compound metabolism; protoporphyrin-IX biosynthesis; coproporphyrinogen-III from 5-aminolevulinate: step 4/4. In terms of biological role, catalyzes the decarboxylation of four acetate groups of uroporphyrinogen-III to yield coproporphyrinogen-III. The polypeptide is Uroporphyrinogen decarboxylase (Streptomyces avermitilis (strain ATCC 31267 / DSM 46492 / JCM 5070 / NBRC 14893 / NCIMB 12804 / NRRL 8165 / MA-4680)).